The following is a 149-amino-acid chain: uncharacterized protein (149 aa).

To B.subtilis XkdN.

This is an uncharacterized protein from Bacillus subtilis (strain 168).